Consider the following 257-residue polypeptide: UPF0246 protein lpg1366 (257 aa).

Belongs to the UPF0246 family.

This chain is UPF0246 protein lpg1366, found in Legionella pneumophila subsp. pneumophila (strain Philadelphia 1 / ATCC 33152 / DSM 7513).